Here is a 241-residue protein sequence, read N- to C-terminus: MTCLTRPLPNVVAILPAAGKGRRMQTTFPKQYLTIGNKTLLELTIYTLLRQPCISQIIVAISPDDYWFAQLPIAAEERVMVVTGGSKRVYSVMRALRYVKHVSWVLVHDAVRPCLHQEDLICLLTITAHSTVGGILATPVRDTIKRAGNIANVKTINYTVVRKDLWHALTPQLFMLELLKSCLQRALKEGVTVTDESAALEYCGYQPLLVPGRADNIKVTWPEDLQLASFYLSQLTNTHNK.

This sequence belongs to the IspD/TarI cytidylyltransferase family. IspD subfamily.

The enzyme catalyses 2-C-methyl-D-erythritol 4-phosphate + CTP + H(+) = 4-CDP-2-C-methyl-D-erythritol + diphosphate. The protein operates within isoprenoid biosynthesis; isopentenyl diphosphate biosynthesis via DXP pathway; isopentenyl diphosphate from 1-deoxy-D-xylulose 5-phosphate: step 2/6. Functionally, catalyzes the formation of 4-diphosphocytidyl-2-C-methyl-D-erythritol from CTP and 2-C-methyl-D-erythritol 4-phosphate (MEP). The sequence is that of 2-C-methyl-D-erythritol 4-phosphate cytidylyltransferase from Baumannia cicadellinicola subsp. Homalodisca coagulata.